We begin with the raw amino-acid sequence, 777 residues long: Glucocorticoid receptor (777 aa).

Over residues 1–14 the composition is skewed to basic and acidic residues; it reads MDSKESLTPGKEEN. The disordered stretch occupies residues 1–22; that stretch reads MDSKESLTPGKEENPSSVLTQE. Positions 1–420 are modulating; that stretch reads MDSKESLTPG…TATTGPPPKL (420 aa). Threonine 8 bears the Phosphothreonine mark. An Omega-N-methylarginine modification is found at arginine 23. Residues serine 45, serine 113, serine 134, and serine 141 each carry the phosphoserine modification. The segment at 130–182 is disordered; that stretch reads NRSTSVPENPKSSASSSVSAAPKEKEFPKTHSDVSSEQQNLKGQTGSNGGNVK. Low complexity predominate over residues 134–150; sequence SVPENPKSSASSSVSAA. Residues 151–163 are compositionally biased toward basic and acidic residues; that stretch reads PKEKEFPKTHSDV. Positions 164–174 are enriched in polar residues; the sequence is SSEQQNLKGQT. 3 positions are modified to phosphoserine: serine 203, serine 211, and serine 226. Lysine 258 participates in a covalent cross-link: Glycyl lysine isopeptide (Lys-Gly) (interchain with G-Cter in SUMO2). Residue serine 267 is modified to Phosphoserine. Residues lysine 277 and lysine 293 each participate in a glycyl lysine isopeptide (Lys-Gly) (interchain with G-Cter in SUMO); alternate cross-link. Glycyl lysine isopeptide (Lys-Gly) (interchain with G-Cter in SUMO2); alternate cross-links involve residues lysine 277 and lysine 293. The segment covering 394–414 has biased composition (low complexity); that stretch reads SSPSMRPDVSSPPSSSSTATT. Residues 394–415 form a disordered region; the sequence is SSPSMRPDVSSPPSSSSTATTG. The residue at position 404 (serine 404) is a Phosphoserine. Lysine 419 participates in a covalent cross-link: Glycyl lysine isopeptide (Lys-Gly) (interchain with G-Cter in ubiquitin). NR C4-type zinc fingers lie at residues 421–441 and 457–481; these read CLVC…CGSC and CAGR…YRKC. Positions 421–486 form a DNA-binding region, nuclear receptor; that stretch reads CLVCSDEASG…RYRKCLQAGM (66 aa). 4 positions are modified to N6-acetyllysine: lysine 480, lysine 492, lysine 494, and lysine 495. The tract at residues 485 to 777 is interaction with CLOCK; sequence GMNLEARKTK…NIKKLLFHQK (293 aa). Positions 487 to 523 are hinge; the sequence is NLEARKTKKKIKGIQQATTGVSQETSENPANKTIVPA. The NR LBD domain maps to 524 to 758; that stretch reads TLPQLTPTLV…FPEMLAEIIT (235 aa). Residues 532 to 697 are interaction with CRY1; that stretch reads LVSLLEVIEP…EIRMTYIKEL (166 aa). Residue lysine 703 forms a Glycyl lysine isopeptide (Lys-Gly) (interchain with G-Cter in SUMO) linkage.

Belongs to the nuclear hormone receptor family. NR3 subfamily. Heteromultimeric cytoplasmic complex with HSP90AA1, HSPA1A/HSPA1B, and FKBP5 or another immunophilin such as PPID, STIP1, or the immunophilin homolog PPP5C. Upon ligand binding FKBP5 dissociates from the complex and FKBP4 takes its place, thereby linking the complex to dynein and mediating transport to the nucleus, where the complex dissociates. Probably forms a complex composed of chaperones HSP90 and HSP70, co-chaperones CDC37, PPP5C, TSC1 and client protein TSC2, CDK4, AKT, RAF1 and NR3C1; this complex does not contain co-chaperones STIP1/HOP and PTGES3/p23. Directly interacts with UNC45A. Binds to DNA as a homodimer, and as heterodimer with NR3C2 or the retinoid X receptor. Binds STAT5A and STAT5B homodimers and heterodimers. Interacts with NRIP1, POU2F1, POU2F2 and TRIM28. Interacts with several coactivator complexes, including the SMARCA4 complex, CREBBP/EP300, TADA2L (Ada complex) and p160 coactivators such as NCOA2 and NCOA6. Interaction with BAG1 inhibits transactivation. Interacts with HEXIM1 and TGFB1I1. Interacts with NCOA1. Interacts with NCOA3, SMARCA4, SMARCC1, SMARCD1, and SMARCE1. Interacts with CLOCK, CRY1 and CRY2 in a ligand-dependent fashion. Interacts with CIART. Interacts with RWDD3. Interacts with UBE2I/UBC9 and this interaction is enhanced in the presence of RWDD3. Interacts with GRIP1. Interacts with NR4A3 (via nuclear receptor DNA-binding domain), represses transcription activity of NR4A3 on the POMC promoter Nur response element (NurRE). Directly interacts with PNRC2 to attract and form a complex with UPF1 and DCP1A; the interaction leads to rapid mRNA degradation. Interacts with GSK3B. Interacts with FNIP1 and FNIP2. Interacts (via C-terminus) with HNRNPU (via C-terminus). Interacts with MCM3AP. Interacts (via domain NR LBD) with HSP90AA1 and HSP90AB1. In the absence of hormonal ligand, interacts with TACC1. Interacts (via NR LBD domain) with ZNF764 (via KRAB domain); the interaction regulates transcription factor activity of NR3C1 by directing its actions toward certain biologic pathways. Post-translationally, acetylation by CLOCK reduces its binding to glucocorticoid response elements and its transcriptional activity. Increased proteasome-mediated degradation in response to glucocorticoids. In terms of processing, phosphorylated in the absence of hormone; becomes hyperphosphorylated in the presence of glucocorticoid. The Ser-203, Ser-226 and Ser-404-phosphorylated forms are mainly cytoplasmic, and the Ser-211-phosphorylated form is nuclear. Phosphorylation at Ser-211 increases transcriptional activity. Phosphorylation at Ser-203, Ser-226 and Ser-404 decreases signaling capacity. Phosphorylation at Ser-404 may protect from glucocorticoid-induced apoptosis. Phosphorylation at Ser-203 and Ser-211 is not required in regulation of chromosome segregation. May be dephosphorylated by PPP5C, attenuates NR3C1 action. Post-translationally, ubiquitinated by UBR5, leading to its degradation: UBR5 specifically recognizes and binds ligand-bound NR3C1 when it is not associated with coactivators (NCOAs). In presence of NCOAs, the UBR5-degron is not accessible, preventing its ubiquitination and degradation. Sumoylation at Lys-277 and Lys-293 negatively regulates its transcriptional activity. Sumoylation at Lys-703 positively regulates its transcriptional activity in the presence of RWDD3. Sumoylation at Lys-277 and Lys-293 is dispensable whereas sumoylation at Lys-703 is critical for the stimulatory effect of RWDD3 on its transcriptional activity. Heat shock increases sumoylation in a RWDD3-dependent manner.

It is found in the cytoplasm. It localises to the nucleus. Its subcellular location is the mitochondrion. The protein resides in the cytoskeleton. The protein localises to the spindle. It is found in the microtubule organizing center. It localises to the centrosome. Its subcellular location is the chromosome. The protein resides in the nucleoplasm. Receptor for glucocorticoids (GC). Has a dual mode of action: as a transcription factor that binds to glucocorticoid response elements (GRE), both for nuclear and mitochondrial DNA, and as a modulator of other transcription factors. Affects inflammatory responses, cellular proliferation and differentiation in target tissues. Involved in chromatin remodeling. Plays a role in rapid mRNA degradation by binding to the 5' UTR of target mRNAs and interacting with PNRC2 in a ligand-dependent manner which recruits the RNA helicase UPF1 and the mRNA-decapping enzyme DCP1A, leading to RNA decay. Could act as a coactivator for STAT5-dependent transcription upon growth hormone (GH) stimulation and could reveal an essential role of hepatic GR in the control of body growth. Mediates glucocorticoid-induced apoptosis. Promotes accurate chromosome segregation during mitosis. May act as a tumor suppressor. May play a negative role in adipogenesis through the regulation of lipolytic and antilipogenic gene expression. The sequence is that of Glucocorticoid receptor (NR3C1) from Saimiri boliviensis boliviensis (Bolivian squirrel monkey).